Here is a 179-residue protein sequence, read N- to C-terminus: uncharacterized protein (179 aa).

Helical transmembrane passes span 9-31 (WILV…VSTL), 41-63 (AFLL…YGSF), 114-136 (AYYG…LLGA), and 146-168 (AFWG…NYLM).

It localises to the cell membrane. This is an uncharacterized protein from Aquifex aeolicus (strain VF5).